A 172-amino-acid chain; its full sequence is uncharacterized protein (172 aa).

The segment at 22–64 is disordered; it reads RSVSSSPAAKQPAPGTVAQSFPPGELALRDETGGRGRGTRGIR.

This is an uncharacterized protein from Human cytomegalovirus (strain AD169) (HHV-5).